Here is a 465-residue protein sequence, read N- to C-terminus: Glutamate--tRNA ligase (465 aa).

The 'HIGH' region signature appears at 11–21; the sequence is PSPTGFIHLGN. The short motif at 243-247 is the 'KMSKS' region element; that stretch reads KMSKR. Lys246 contributes to the ATP binding site.

Belongs to the class-I aminoacyl-tRNA synthetase family. Glutamate--tRNA ligase type 1 subfamily. In terms of assembly, monomer.

It is found in the cytoplasm. It carries out the reaction tRNA(Glu) + L-glutamate + ATP = L-glutamyl-tRNA(Glu) + AMP + diphosphate. In terms of biological role, catalyzes the attachment of glutamate to tRNA(Glu) in a two-step reaction: glutamate is first activated by ATP to form Glu-AMP and then transferred to the acceptor end of tRNA(Glu). This Cupriavidus metallidurans (strain ATCC 43123 / DSM 2839 / NBRC 102507 / CH34) (Ralstonia metallidurans) protein is Glutamate--tRNA ligase.